The primary structure comprises 72 residues: ATP synthase subunit c (72 aa).

2 helical membrane passes run 1-21 (MSLG…GAGI) and 49-69 (FIGV…AFIV).

Belongs to the ATPase C chain family. F-type ATPases have 2 components, F(1) - the catalytic core - and F(0) - the membrane proton channel. F(1) has five subunits: alpha(3), beta(3), gamma(1), delta(1), epsilon(1). F(0) has three main subunits: a(1), b(2) and c(10-14). The alpha and beta chains form an alternating ring which encloses part of the gamma chain. F(1) is attached to F(0) by a central stalk formed by the gamma and epsilon chains, while a peripheral stalk is formed by the delta and b chains.

It is found in the cell membrane. In terms of biological role, f(1)F(0) ATP synthase produces ATP from ADP in the presence of a proton or sodium gradient. F-type ATPases consist of two structural domains, F(1) containing the extramembraneous catalytic core and F(0) containing the membrane proton channel, linked together by a central stalk and a peripheral stalk. During catalysis, ATP synthesis in the catalytic domain of F(1) is coupled via a rotary mechanism of the central stalk subunits to proton translocation. Key component of the F(0) channel; it plays a direct role in translocation across the membrane. A homomeric c-ring of between 10-14 subunits forms the central stalk rotor element with the F(1) delta and epsilon subunits. This chain is ATP synthase subunit c, found in Bacillus anthracis (strain A0248).